Consider the following 289-residue polypeptide: Extracellular ribonuclease (289 aa).

The first 24 residues, 1–24, serve as a signal peptide directing secretion; sequence MTKKLWFLPIVCLFFILGWTAPSA. Positions 25 to 51 are excised as a propeptide; it reads SAGAPADTNLYSRLAVSTAGGTTLFPQ. Positions 177–197 are disordered; that stretch reads FDNGGSEYPKAPGNYYDGDSW.

The protein resides in the secreted. Functionally, mg(2+)-activated ribonuclease which hydrolyzes RNA apparently nonspecifically into oligonucleotides with 5'-terminal phosphate. This is Extracellular ribonuclease (bsn) from Bacillus amyloliquefaciens (Bacillus velezensis).